We begin with the raw amino-acid sequence, 123 residues long: MGLGSSKRKEEPPHKSEPKTVGRVKRAGARPDEMIAKYAEVLKTRGILPEYFLVHEAKSSQYIDEDGDVANEFYQETMSDGEKRRLCRLMKNLRPKGKERYAIPRLKHDIPVVIWEVQQPQET.

Residues 1–28 (MGLGSSKRKEEPPHKSEPKTVGRVKRAG) form a disordered region. Basic and acidic residues predominate over residues 7 to 20 (KRKEEPPHKSEPKT).

This sequence belongs to the TUSC2 family.

This is an uncharacterized protein from Caenorhabditis elegans.